Here is a 457-residue protein sequence, read N- to C-terminus: tRNA (guanine(37)-N(1))-methyltransferase (457 aa).

Residues H240, 278–279 (DL), 306–307 (DG), and N338 contribute to the S-adenosyl-L-methionine site.

The protein belongs to the class I-like SAM-binding methyltransferase superfamily. TRM5/TYW2 family. As to quaternary structure, monomer.

It is found in the mitochondrion matrix. Its subcellular location is the nucleus. The protein resides in the cytoplasm. The enzyme catalyses guanosine(37) in tRNA + S-adenosyl-L-methionine = N(1)-methylguanosine(37) in tRNA + S-adenosyl-L-homocysteine + H(+). Functionally, specifically methylates the N1 position of guanosine-37 in various cytoplasmic and mitochondrial tRNAs. Methylation is not dependent on the nature of the nucleoside 5' of the target nucleoside. This is the first step in the biosynthesis of wybutosine (yW), a modified base adjacent to the anticodon of tRNAs and required for accurate decoding. This Drosophila melanogaster (Fruit fly) protein is tRNA (guanine(37)-N(1))-methyltransferase.